We begin with the raw amino-acid sequence, 339 residues long: Cathepsin L (339 aa).

The N-terminal stretch at Met-1–Ala-17 is a signal peptide. Residues Ile-18–Thr-121 constitute a propeptide, activation peptide. The N-linked (GlcNAc...) asparagine glycan is linked to Asn-96. Disulfide bonds link Cys-143–Cys-186, Cys-177–Cys-219, and Cys-278–Cys-328. Cys-146 is a catalytic residue. The active site involves His-285. A propeptide spanning residues Asp-295 to Gly-298 is cleaved from the precursor. Residue Asn-306 is part of the active site.

It belongs to the peptidase C1 family. As to quaternary structure, dimer of a heavy and a light chain linked by disulfide bonds.

Its subcellular location is the lysosome. The catalysed reaction is Specificity close to that of papain. As compared to cathepsin B, cathepsin L exhibits higher activity toward protein substrates, but has little activity on Z-Arg-Arg-NHMec, and no peptidyl-dipeptidase activity.. Its function is as follows. Important for the overall degradation of proteins in lysosomes. Required for differentiation of imaginal disks. The sequence is that of Cathepsin L from Sarcophaga peregrina (Flesh fly).